We begin with the raw amino-acid sequence, 379 residues long: uncharacterized protein (379 aa).

Disordered regions lie at residues 1-25 (MASD…EKGK), 128-158 (QGKT…IERT), and 355-379 (TEKT…QGDI). Polar residues predominate over residues 128–141 (QGKTTSATTSNSTI).

This is an uncharacterized protein from Caenorhabditis elegans.